A 233-amino-acid polypeptide reads, in one-letter code: Orotidine 5'-phosphate decarboxylase (233 aa).

Substrate is bound by residues aspartate 11, lysine 34, 61 to 70 (DLKLHDIPNT), threonine 117, arginine 179, glutamine 189, glycine 209, and arginine 210. Lysine 63 (proton donor) is an active-site residue.

This sequence belongs to the OMP decarboxylase family. Type 1 subfamily. As to quaternary structure, homodimer.

The enzyme catalyses orotidine 5'-phosphate + H(+) = UMP + CO2. It participates in pyrimidine metabolism; UMP biosynthesis via de novo pathway; UMP from orotate: step 2/2. Its function is as follows. Catalyzes the decarboxylation of orotidine 5'-monophosphate (OMP) to uridine 5'-monophosphate (UMP). The sequence is that of Orotidine 5'-phosphate decarboxylase from Streptococcus agalactiae serotype Ia (strain ATCC 27591 / A909 / CDC SS700).